The chain runs to 577 residues: Efflux pump notK' (577 aa).

Asn-62 and Asn-84 each carry an N-linked (GlcNAc...) asparagine glycan. Transmembrane regions (helical) follow at residues 104–124 (AAIA…PVAL), 151–171 (LAVT…MLGI), 189–209 (AGIG…LGLV), 241–261 (NPTM…LMMY), and 265–285 (GAVI…TTPV). The N-linked (GlcNAc...) asparagine glycan is linked to Asn-320. 5 helical membrane-spanning segments follow: residues 328–348 (FGLA…GTLY), 373–393 (VDAI…TAFV), 413–433 (GICF…PPWA), 434–454 (TGST…EINW), and 476–496 (IADG…GVWV). Residues 555–566 (MPPNGSMSSGSP) are compositionally biased toward low complexity. The disordered stretch occupies residues 555–577 (MPPNGSMSSGSPEQVAEKAVGKY). An N-linked (GlcNAc...) asparagine glycan is attached at Asn-558.

It belongs to the nucleobase:cation symporter-2 (NCS2) (TC 2.A.40) family. Azg-like subfamily.

It localises to the cell membrane. Efflux pump; part of the gene cluster that mediates the biosynthesis of notoamide, a fungal indole alkaloid that belongs to a family of natural products containing a characteristic bicyclo[2.2.2]diazaoctane core. The chain is Efflux pump notK' from Aspergillus versicolor.